A 136-amino-acid chain; its full sequence is Large ribosomal subunit protein bL19 (136 aa).

The segment at 1–23 (MEETVNNQETPETSEEETADEET) is disordered. The segment covering 12–23 (ETSEEETADEET) has biased composition (acidic residues).

It belongs to the bacterial ribosomal protein bL19 family.

Its function is as follows. This protein is located at the 30S-50S ribosomal subunit interface and may play a role in the structure and function of the aminoacyl-tRNA binding site. This is Large ribosomal subunit protein bL19 from Dehalococcoides mccartyi (strain ATCC BAA-2266 / KCTC 15142 / 195) (Dehalococcoides ethenogenes (strain 195)).